The following is a 447-amino-acid chain: Asparagine--tRNA ligase (447 aa).

The protein belongs to the class-II aminoacyl-tRNA synthetase family. As to quaternary structure, homodimer.

Its subcellular location is the cytoplasm. The catalysed reaction is tRNA(Asn) + L-asparagine + ATP = L-asparaginyl-tRNA(Asn) + AMP + diphosphate + H(+). The polypeptide is Asparagine--tRNA ligase (Lactococcus lactis subsp. cremoris (strain SK11)).